We begin with the raw amino-acid sequence, 407 residues long: Transcriptional regulator alnR (407 aa).

The segment at residues S23 to Y53 is a DNA-binding region (zn(2)-C6 fungal-type). The segment at Y53–N85 is disordered. The segment covering E75–N85 has biased composition (polar residues).

The protein localises to the nucleus. Transcriptional regulator involved in the positive regulation of the expression of the gene cluster that mediates the biosynthesis of asperlin, a polyketide showing anti-inflammatory, antitumor and antibiotic activities. This chain is Transcriptional regulator alnR, found in Emericella nidulans (strain FGSC A4 / ATCC 38163 / CBS 112.46 / NRRL 194 / M139) (Aspergillus nidulans).